Here is a 179-residue protein sequence, read N- to C-terminus: Signal peptidase complex subunit 3 (179 aa).

Residues 1–12 (MHTVLTRGNATV) are Cytoplasmic-facing. The chain crosses the membrane as a helical; Signal-anchor for type II membrane protein span at residues 13–33 (AYTLSVLACLTFSCFLSTVFL). At 34-179 (DYRTDANINT…FPADYATSSI (146 aa)) the chain is on the lumenal side. Residues N73 and N141 are each glycosylated (N-linked (GlcNAc...) asparagine).

It belongs to the SPCS3 family. As to quaternary structure, component of the signal peptidase complex (SPC) composed of a catalytic subunit twr/SEC11 and three accessory subunits Spase12/SPCS1, Spase25/SPCS2 and Spase22-23/SPCS3. The complex induces a local thinning of the ER membrane which is used to measure the length of the signal peptide (SP) h-region of protein substrates. This ensures the selectivity of the complex towards h-regions shorter than 18-20 amino acids.

Its subcellular location is the endoplasmic reticulum membrane. Its function is as follows. Essential component of the signal peptidase complex (SPC) which catalyzes the cleavage of N-terminal signal sequences from nascent proteins as they are translocated into the lumen of the endoplasmic reticulum. Essential for the SPC catalytic activity, possibly by stabilizing and positioning the active center of the complex close to the lumenal surface. (Microbial infection) Plays an important role in infection by flaviviruses such as West Nile virus and Dengue virus type 2. The polypeptide is Signal peptidase complex subunit 3 (Spase22-23) (Drosophila melanogaster (Fruit fly)).